Here is a 364-residue protein sequence, read N- to C-terminus: Capsular polysaccharide phosphotransferase fcs1 (364 aa).

Belongs to the stealth family.

In terms of biological role, part of a group II capsule biosynthesis locus. The protein is Capsular polysaccharide phosphotransferase fcs1 (fcs1) of Haemophilus influenzae.